Here is a 135-residue protein sequence, read N- to C-terminus: ATP synthase epsilon chain (135 aa).

It belongs to the ATPase epsilon chain family. In terms of assembly, F-type ATPases have 2 components, CF(1) - the catalytic core - and CF(0) - the membrane proton channel. CF(1) has five subunits: alpha(3), beta(3), gamma(1), delta(1), epsilon(1). CF(0) has three main subunits: a, b and c.

It is found in the cell inner membrane. Produces ATP from ADP in the presence of a proton gradient across the membrane. In Rhodopseudomonas palustris (strain BisB5), this protein is ATP synthase epsilon chain.